The sequence spans 451 residues: Phosphoglucosamine mutase (451 aa).

Serine 101 serves as the catalytic Phosphoserine intermediate. Mg(2+) contacts are provided by serine 101, aspartate 240, aspartate 242, and aspartate 244. A Phosphoserine modification is found at serine 101.

This sequence belongs to the phosphohexose mutase family. The cofactor is Mg(2+). Activated by phosphorylation.

It carries out the reaction alpha-D-glucosamine 1-phosphate = D-glucosamine 6-phosphate. Functionally, catalyzes the conversion of glucosamine-6-phosphate to glucosamine-1-phosphate. The protein is Phosphoglucosamine mutase of Streptococcus pyogenes serotype M1.